Reading from the N-terminus, the 346-residue chain is Uroporphyrinogen decarboxylase (346 aa).

Substrate-binding positions include 23–27, Asp73, Tyr151, Ser206, and His321; that span reads RQAGR.

It belongs to the uroporphyrinogen decarboxylase family. In terms of assembly, homodimer.

The protein resides in the cytoplasm. It carries out the reaction uroporphyrinogen III + 4 H(+) = coproporphyrinogen III + 4 CO2. It participates in porphyrin-containing compound metabolism; protoporphyrin-IX biosynthesis; coproporphyrinogen-III from 5-aminolevulinate: step 4/4. Its function is as follows. Catalyzes the decarboxylation of four acetate groups of uroporphyrinogen-III to yield coproporphyrinogen-III. This is Uroporphyrinogen decarboxylase from Sulfurovum sp. (strain NBC37-1).